The chain runs to 330 residues: Phosphate acyltransferase (330 aa).

This sequence belongs to the PlsX family. As to quaternary structure, homodimer. Probably interacts with PlsY.

Its subcellular location is the cytoplasm. The enzyme catalyses a fatty acyl-[ACP] + phosphate = an acyl phosphate + holo-[ACP]. It participates in lipid metabolism; phospholipid metabolism. Functionally, catalyzes the reversible formation of acyl-phosphate (acyl-PO(4)) from acyl-[acyl-carrier-protein] (acyl-ACP). This enzyme utilizes acyl-ACP as fatty acyl donor, but not acyl-CoA. In Campylobacter hominis (strain ATCC BAA-381 / DSM 21671 / CCUG 45161 / LMG 19568 / NCTC 13146 / CH001A), this protein is Phosphate acyltransferase.